Reading from the N-terminus, the 295-residue chain is MASMGEKEAVAELYDKVTSNGILEELFGEHLHDGYYEVGTVATISAHRVAVVRIIDEALRFADVFTDDQAKKPRNILDVGCGKGGTCVHMARKYDIQCTGISISPDEIQCAKHLAASQGLENKVSFDVGDALNMRYSDGSFELIFVIQCIEHIQDKEKFIREIVRVAAPGAQIVIISTACRNLSPSEKSLKPKEEKTLKKICNYLHLSGFCSLSDYSNWLTPLPIEDMKIADWTQNAAPFYTLLLREAFSIKGFISLLMNGGWTAVKVILGMKTIHEAIENDLLKIVAVTFRKTK.

Residues 76 to 85 (ILDVGCGKGG) form an SAM motif I region. Residues 138-144 (DGSFELI) carry the Vacuolar targeting signal motif. The interval 139–147 (GSFELIFVI) is SAM motif II. The SAM motif III stretch occupies residues 166 to 175 (VAAPGAQIVI).

The protein belongs to the class I-like SAM-binding methyltransferase superfamily. gTMT family. In terms of assembly, homodimer. Mainly expressed in young leaves, and, to a lower extent, in mature leaves, flowers, stems and roots (at protein level). Transcripts levels are highest in flowers, moderate in leaves and low in roots and stems.

It is found in the vacuole membrane. The enzyme catalyses perivine + S-adenosyl-L-methionine = vobasine + S-adenosyl-L-homocysteine + 2 H(+). It participates in alkaloid biosynthesis; vindoline biosynthesis. Its function is as follows. S-adenosyl-L-methionine-dependent N-methyltransferase involved in the biosynthesis of biologically active monoterpenoid indole alkaloids (MIAs) natural products including vindoline. Catalyzes the conversion of perivine to Nbeta-methylperivine (vobasine) by methylating its N4 nitrogen. Inactive with picrinine as substrate. The sequence is that of Perivine-Nbeta-methyltransferase from Catharanthus roseus (Madagascar periwinkle).